A 90-amino-acid chain; its full sequence is DNA-directed RNA polymerase subunit Rpo11 (90 aa).

Belongs to the archaeal Rpo11/eukaryotic RPB11/RPC19 RNA polymerase subunit family. Part of the RNA polymerase complex.

The protein localises to the cytoplasm. It carries out the reaction RNA(n) + a ribonucleoside 5'-triphosphate = RNA(n+1) + diphosphate. In terms of biological role, DNA-dependent RNA polymerase (RNAP) catalyzes the transcription of DNA into RNA using the four ribonucleoside triphosphates as substrates. This Metallosphaera sedula (strain ATCC 51363 / DSM 5348 / JCM 9185 / NBRC 15509 / TH2) protein is DNA-directed RNA polymerase subunit Rpo11.